The chain runs to 310 residues: GMP synthase [glutamine-hydrolyzing] subunit B (310 aa).

A GMPS ATP-PPase domain is found at 2–185; it reads FDAKSFIEES…LGLPEKIAHR (184 aa). 29-35 contacts ATP; the sequence is SGGVDSS.

In terms of assembly, heterodimer composed of a glutamine amidotransferase subunit (A) and a GMP-binding subunit (B).

It catalyses the reaction XMP + L-glutamine + ATP + H2O = GMP + L-glutamate + AMP + diphosphate + 2 H(+). It functions in the pathway purine metabolism; GMP biosynthesis; GMP from XMP (L-Gln route): step 1/1. Functionally, catalyzes the synthesis of GMP from XMP. The polypeptide is GMP synthase [glutamine-hydrolyzing] subunit B (Methanococcus vannielii (strain ATCC 35089 / DSM 1224 / JCM 13029 / OCM 148 / SB)).